The sequence spans 334 residues: Protein-methionine-sulfoxide reductase catalytic subunit MsrP (334 aa).

Positions 1-44 (MKKNQFLKESDVTAESVFFMKRRQVLKALGISAAALSLPHAAHA) form a signal peptide, tat-type signal. Residues Asn-88, 91–92 (YE), Cys-146, Thr-181, Asn-233, Arg-238, and 249–251 (GIK) each bind Mo-molybdopterin.

Belongs to the MsrP family. In terms of assembly, heterodimer of a catalytic subunit (MsrP) and a heme-binding subunit (MsrQ). Mo-molybdopterin is required as a cofactor. Predicted to be exported by the Tat system. The position of the signal peptide cleavage has not been experimentally proven.

The protein resides in the periplasm. It carries out the reaction L-methionyl-[protein] + a quinone + H2O = L-methionyl-(S)-S-oxide-[protein] + a quinol. It catalyses the reaction L-methionyl-[protein] + a quinone + H2O = L-methionyl-(R)-S-oxide-[protein] + a quinol. Functionally, part of the MsrPQ system that repairs oxidized periplasmic proteins containing methionine sulfoxide residues (Met-O), using respiratory chain electrons. Thus protects these proteins from oxidative-stress damage caused by reactive species of oxygen and chlorine generated by the host defense mechanisms. MsrPQ is essential for the maintenance of envelope integrity under bleach stress, rescuing a wide series of structurally unrelated periplasmic proteins from methionine oxidation, including the primary periplasmic chaperone SurA and the lipoprotein Pal. The catalytic subunit MsrP is non-stereospecific, being able to reduce both (R-) and (S-) diastereoisomers of methionine sulfoxide. The chain is Protein-methionine-sulfoxide reductase catalytic subunit MsrP from Shigella boydii serotype 18 (strain CDC 3083-94 / BS512).